A 405-amino-acid chain; its full sequence is MGSSDSSSGSAQKAARHQHEPPPPRQRGSAPELPPGFRFHPTDEELVVHYLKKKAAKVPLPVTIIAEVDLYKFDPWELPEKATFGEQEWYFFSPRDRKYPNGARPNRAATSGYWKATGTDKPILASGTGCGLVREKLGVKKALVFYRGKPPKGLKTNWIMHEYRLTDVSGSTTTSRPPPPVTGGSRAAASLRLDDWVLCRIYKKINKAAAGDQQRSTECEDSVEDAVTAYPLYATAGMAGAGAHGSNYASPSLLHHQDSHFLEGLFTADDAGLSAGATSLSHLAAAARASPAPTKQFLAPSSSTPFNWLDASPAGILPQARNFPGFNRSRNVGNMSLSSTADMAGAAGNAVNAMSAFMNPLPVQDGTYHQHHVILGAPLAPEATTGGATSGFQHPVQVSGVNWNP.

Positions 1-10 (MGSSDSSSGS) are enriched in low complexity. A disordered region spans residues 1–38 (MGSSDSSSGSAQKAARHQHEPPPPRQRGSAPELPPGFR). An NAC domain is found at 33–204 (LPPGFRFHPT…DWVLCRIYKK (172 aa)). The DNA-binding element occupies 137 to 210 (LGVKKALVFY…IYKKINKAAA (74 aa)).

In terms of tissue distribution, expressed in flag leaves, green spikes and peduncles.

Its subcellular location is the nucleus. Its function is as follows. Transcription factor of the NAC family associated with the grain protein content (GPC). Accelerates senescence and increases nutrient remobilization from leaves to developing grains. The tetraploid cultivated wheat (T.durum) contains one additional gene coding for a functional protein (NAM-B2) and one extra pseudogene (NAM-B1). This chain is NAC transcription factor NAM-A1 (NAM-A1), found in Triticum turgidum subsp. durum (Durum wheat).